Here is a 597-residue protein sequence, read N- to C-terminus: Ran-binding protein 9 (597 aa).

The B30.2/SPRY domain occupies 29 to 216 (LNQRLRRLYP…VDANFGQHPF (188 aa)). Residues 247–279 (WQAMIQKMVASYLVHHSYCATAEAFAKSTDQAV) enclose the LisH domain. The 58-residue stretch at 285–342 (SIKNRQKIQKLVLSGRMGEAIETTQQLYPSLLERNPDLLFMLKVRQFIEMVNGTDSEV) folds into the CTLH domain. 3 disordered regions span residues 343–375 (RCLG…SSQA), 389–417 (SSSK…VLNG), and 437–475 (SNGV…QSKR). Residues 438-456 (NGVSESSSNGFLNGSSTHG) are compositionally biased toward polar residues. Residues 459–468 (QEDCDADMEV) are compositionally biased toward acidic residues.

Belongs to the RANBP9/10 family. In terms of assembly, identified in the CTLH complex that contains at least MAEA, RMND5A (or alternatively its paralog RMND5B), GID8, WDR26, and RANBP9 and/or RANBP10.

The protein resides in the cytoplasm. It localises to the cell membrane. It is found in the nucleus. May act as scaffolding protein, and as adapter protein to couple membrane receptors to intracellular signaling pathways. Acts as a mediator of cell spreading and actin cytoskeleton rearrangement. Core component of the CTLH E3 ubiquitin-protein ligase complex that mediates ubiquitination and subsequent proteasomal degradation of target proteins. The sequence is that of Ran-binding protein 9 (ranbp9) from Danio rerio (Zebrafish).